The chain runs to 360 residues: Histidinol-phosphate aminotransferase (360 aa).

N6-(pyridoxal phosphate)lysine is present on Lys218.

Belongs to the class-II pyridoxal-phosphate-dependent aminotransferase family. Histidinol-phosphate aminotransferase subfamily. In terms of assembly, homodimer. Pyridoxal 5'-phosphate serves as cofactor.

The enzyme catalyses L-histidinol phosphate + 2-oxoglutarate = 3-(imidazol-4-yl)-2-oxopropyl phosphate + L-glutamate. Its pathway is amino-acid biosynthesis; L-histidine biosynthesis; L-histidine from 5-phospho-alpha-D-ribose 1-diphosphate: step 7/9. This is Histidinol-phosphate aminotransferase from Chlorobium phaeobacteroides (strain DSM 266 / SMG 266 / 2430).